The primary structure comprises 238 residues: N-methyltransferase vrtF (238 aa).

Belongs to the methyltransferase superfamily.

It participates in secondary metabolite biosynthesis; terpenoid biosynthesis. N-methyltransferase; part of the gene cluster that mediates the biosynthesis of viridicatumtoxin, a tetracycline-like fungal meroterpenoid with a unique, fused spirobicyclic ring system. The first step of the pathway is the production of the malonamoyl-CoA starter unit for the polyketide synthase vrtA. The aldolase vrtJ may be involved in the synthesis of the malonamate substrate for malonamoyl-CoA synthetase vrtB. The polyketide synthase vrtA then may utilize the malonamoyl-CoA starter unit, followed by sequential condensation of eight malonyl-CoA units to form the polyketide backbone. The cyclization of the last ring could be mediated by the lactamase-like protein vrtG. The proposed post-PKS tailoring steps are a hydroxylation at C5 catalyzed the cytochrome P450 monooxygenase vrtE, a hydroxylation at C12a catalyzed by VrtH and/or VrtI, and an O-methylation by the O-methyltransferase vrtF. VrtC is then proposed to catalyze the transfer of a geranyl group synthesized by vrtD to the aromatic C ring of the tetracyclic polyketide intermediate of viridicatumtoxin to yield previridicatumtoxin. Finally, the cytochrome P450 monooxygenase vrtK catalyzes the spirocyclization of the geranyl moiety of previridicatumtoxin to afford viridicatumtoxin. This is N-methyltransferase vrtF from Penicillium aethiopicum.